Here is a 421-residue protein sequence, read N- to C-terminus: Synaptotagmin-1 (421 aa).

The Vesicular portion of the chain corresponds to 1-57 (MVSASRPEALAAPVTTVATLVPHNATEPASPGEGKEDAFSKLKQKFMNELHKIPLPP). N-linked (GlcNAc...) asparagine glycosylation occurs at N24. A helical transmembrane segment spans residues 58-79 (WALIAIAIVAVLLVVTCCFCVC). 5 S-palmitoyl cysteine lipidation sites follow: C74, C75, C77, C79, and C82. Residues 80 to 421 (KKCLFKKKNK…EVDAMLAVKK (342 aa)) lie on the Cytoplasmic side of the membrane. The tract at residues 112 to 141 (TMKDQALKDDDAETGLTDGEEKEEPKEEEK) is disordered. A compositionally biased stretch (acidic residues) spans 121-133 (DDAETGLTDGEEK). A Phosphothreonine modification is found at T128. The tract at residues 135 to 381 (EPKEEEKLGK…AIGKVFVGYN (247 aa)) is phospholipid binding. The 120-residue stretch at 141 to 260 (KLGKLQYSLD…DFGHVTEEWR (120 aa)) folds into the C2 1 domain. 3 residues coordinate Ca(2+): L171, D172, and D178. Y229 is subject to Phosphotyrosine. Ca(2+) contacts are provided by D230, F231, D232, S235, K236, and D238. Residue S264 is modified to Phosphoserine. In terms of domain architecture, C2 2 spans 272–405 (KLGDICFSLR…NPRRPIAQWH (134 aa)). Ca(2+) contacts are provided by D303 and D309. A phosphoserine mark is found at S342 and S344. Residues D363, D365, and D371 each coordinate Ca(2+).

It belongs to the synaptotagmin family. As to quaternary structure, homotetramer. Heterodimer; heterodimerizes with SYT2 in presence of calcium. Interacts with SCAMP5. Interacts with STON2. Forms a complex with SV2B, syntaxin 1 and SNAP25. Interacts with SV2A, SV2B and SV2C. Interacts with RIMS1. Interacts with PRRT2. Interacts with DNAJC5 in a phosphorylation-dependent manner. Interacts (via N-terminus) with RAB3A. Interacts with SYT12. Interacts with calmodulin. Interacts with DNM1 (via C-terminal proline-rich domain (PRD)); this interaction facilitates vesicle fission during clathrin-mediated endocytosis (CME). It depends on Ca(2+) as a cofactor. Post-translationally, glycosylated. In terms of tissue distribution, expressed in the brain and adrenal medulla (at protein level).

The protein resides in the cytoplasmic vesicle. It is found in the secretory vesicle membrane. Its subcellular location is the secretory vesicle. It localises to the synaptic vesicle membrane. The protein localises to the chromaffin granule membrane. The protein resides in the cytoplasm. In terms of biological role, calcium sensor that participates in triggering neurotransmitter release at the synapse. May have a regulatory role in the membrane interactions during trafficking of synaptic vesicles at the active zone of the synapse. It binds acidic phospholipids with a specificity that requires the presence of both an acidic head group and a diacyl backbone. A Ca(2+)-dependent interaction between synaptotagmin and putative receptors for activated protein kinase C has also been reported. It can bind to at least three additional proteins in a Ca(2+)-independent manner; these are neurexins, syntaxin and AP2. Plays a role in dendrite formation by melanocytes. The polypeptide is Synaptotagmin-1 (Mus musculus (Mouse)).